A 302-amino-acid chain; its full sequence is 2-phosphoglycerate kinase (302 aa).

The 88-residue stretch at isoleucine 2–isoleucine 89 folds into the ATP-cone domain.

Belongs to the 2-phosphoglycerate kinase family. The cofactor is a divalent metal cation.

The enzyme catalyses (2R)-2-phosphoglycerate + ATP = (2R)-2,3-bisphosphoglycerate + ADP + H(+). The protein operates within thermoadapter biosynthesis; cyclic 2,3-diphosphoglycerate biosynthesis; cyclic 2,3-diphosphoglycerate from 2-phospho-D-glycerate: step 1/2. Its function is as follows. Catalyzes the phosphorylation of 2-phosphoglycerate to 2,3-diphosphoglycerate. Involved in the biosynthesis of cyclic 2,3-bisphosphoglycerate, a thermoprotectant. In Pyrococcus furiosus (strain ATCC 43587 / DSM 3638 / JCM 8422 / Vc1), this protein is 2-phosphoglycerate kinase.